The chain runs to 206 residues: Ribosomal RNA large subunit methyltransferase E (206 aa).

Gly61, Trp63, Asp81, Asp97, and Asp122 together coordinate S-adenosyl-L-methionine. Lys162 (proton acceptor) is an active-site residue.

Belongs to the class I-like SAM-binding methyltransferase superfamily. RNA methyltransferase RlmE family.

The protein resides in the cytoplasm. The enzyme catalyses uridine(2552) in 23S rRNA + S-adenosyl-L-methionine = 2'-O-methyluridine(2552) in 23S rRNA + S-adenosyl-L-homocysteine + H(+). Its function is as follows. Specifically methylates the uridine in position 2552 of 23S rRNA at the 2'-O position of the ribose in the fully assembled 50S ribosomal subunit. This Neisseria gonorrhoeae (strain ATCC 700825 / FA 1090) protein is Ribosomal RNA large subunit methyltransferase E.